Reading from the N-terminus, the 439-residue chain is Dihydroorotate dehydrogenase (quinone), mitochondrial (439 aa).

The N-terminal 22 residues, 1–22 (MMHRVGFNVIGRRSFFTVNARR), are a transit peptide targeting the mitochondrion. The helical transmembrane segment at 37 to 53 (LTALLLAGSAGYLYFMN) threads the bilayer. FMN contacts are provided by residues 119–123 (AGLDK) and Ser143. Lys123 contributes to the substrate binding site. 168-172 (NRYGF) provides a ligand contact to substrate. Residues Asn215 and Asn245 each contribute to the FMN site. A substrate-binding site is contributed by 245 to 250 (NVSSPN). Residue Ser248 is the Nucleophile of the active site. Residues Lys296 and Ser324 each contribute to the FMN site. 325–326 (NT) is a substrate binding site. Residues Gly350, Gly380, and 401–402 (YT) contribute to the FMN site.

This sequence belongs to the dihydroorotate dehydrogenase family. Type 2 subfamily. FMN serves as cofactor.

The protein localises to the mitochondrion inner membrane. It catalyses the reaction (S)-dihydroorotate + a quinone = orotate + a quinol. It participates in pyrimidine metabolism; UMP biosynthesis via de novo pathway; orotate from (S)-dihydroorotate (quinone route): step 1/1. Functionally, catalyzes the conversion of dihydroorotate to orotate with quinone as electron acceptor. In Candida glabrata (strain ATCC 2001 / BCRC 20586 / JCM 3761 / NBRC 0622 / NRRL Y-65 / CBS 138) (Yeast), this protein is Dihydroorotate dehydrogenase (quinone), mitochondrial (URA9).